A 962-amino-acid polypeptide reads, in one-letter code: Glycine dehydrogenase (decarboxylating) (962 aa).

N6-(pyridoxal phosphate)lysine is present on K709.

The protein belongs to the GcvP family. The glycine cleavage system is composed of four proteins: P, T, L and H. Requires pyridoxal 5'-phosphate as cofactor.

The enzyme catalyses N(6)-[(R)-lipoyl]-L-lysyl-[glycine-cleavage complex H protein] + glycine + H(+) = N(6)-[(R)-S(8)-aminomethyldihydrolipoyl]-L-lysyl-[glycine-cleavage complex H protein] + CO2. Functionally, the glycine cleavage system catalyzes the degradation of glycine. The P protein binds the alpha-amino group of glycine through its pyridoxal phosphate cofactor; CO(2) is released and the remaining methylamine moiety is then transferred to the lipoamide cofactor of the H protein. This chain is Glycine dehydrogenase (decarboxylating), found in Shewanella frigidimarina (strain NCIMB 400).